Here is a 678-residue protein sequence, read N- to C-terminus: Transcriptional regulator CRZ1 (678 aa).

Residues 1–21 are compositionally biased toward polar residues; it reads MSFSNGNMASYMTSSNGEEQS. Disordered stretches follow at residues 1-50 and 159-195; these read MSFS…SHTF and TPAD…NYSD. Low complexity predominate over residues 34–47; the sequence is YRRNNFRNSSNSGS. Residues 166–195 show a composition bias toward polar residues; the sequence is RPSLTNQFLSPRSNYDGTTRSSGIDSNYSD. At Thr170 the chain carries Phosphothreonine. Phosphoserine occurs at positions 175, 245, and 385. The tract at residues 401-486 is disordered; that stretch reads KLKKSRRRSS…SNFNEDNNNN (86 aa). Residues 410–428 are compositionally biased toward low complexity; it reads SQTSNNSFTSRRSSRSRSI. 2 stretches are compositionally biased toward basic and acidic residues: residues 429 to 446 and 457 to 467; these read SPDE…KLLE and DNNRERYDNDS. Positions 472 to 486 are enriched in low complexity; it reads NTINSSNFNEDNNNN. 2 C2H2-type zinc fingers span residues 569–591 and 597–619; these read FACD…LRTH and FICS…EDLH.

Phosphorylated. Dephosphorylated by calcineurin which leads to rapid translocation from the cytoplasm to the nucleus. Phosphorylated by the cyclin-CDK PHO80-PHO85.

It localises to the nucleus. Its subcellular location is the cytoplasm. Its function is as follows. Involved in the regulation of calcium ion homeostasis. Binds to the calcineurin-dependent response element. Transcriptionally regulates PMC1, PMR1, PMR2A and FKS2. The chain is Transcriptional regulator CRZ1 (CRZ1) from Saccharomyces cerevisiae (strain ATCC 204508 / S288c) (Baker's yeast).